Reading from the N-terminus, the 258-residue chain is Peroxisomal membrane protein 11B (258 aa).

Residue Lys43 is modified to N6-acetyllysine. The interval 210–258 (VVRNACDLFIPLDKLGLWRCGPGIVGLCGLVSSILSILTLICPWLRLKP) is interaction with PEX19, PEX11G and FIS1 and peroxisome targeting. Residues 232-254 (GIVGLCGLVSSILSILTLICPWL) form a helical membrane-spanning segment.

The protein belongs to the peroxin-11 family. As to quaternary structure, homodimer. Heterodimer with PEX11G. Interacts with PEX19. Interacts with FIS1.

The protein localises to the peroxisome membrane. In terms of biological role, involved in peroxisomal proliferation. May regulate peroxisome division by recruiting the dynamin-related GTPase DNM1L to the peroxisomal membrane. Promotes membrane protrusion and elongation on the peroxisomal surface. In Bos taurus (Bovine), this protein is Peroxisomal membrane protein 11B (PEX11B).